Consider the following 76-residue polypeptide: Omega-conotoxin-like TxMKLT1-0141 (76 aa).

The signal sequence occupies residues 1-22; sequence MKLTCMMIVAVLFLTAWTFATA. A propeptide spanning residues 23–50 is cleaved from the precursor; the sequence is DDSSNGLENLFPKAHHEMKNPEASKLNE. Intrachain disulfides connect C52–C67, C59–C70, and C66–C75.

The protein belongs to the conotoxin O1 superfamily. As to expression, expressed by the venom duct.

It localises to the secreted. Its function is as follows. Omega-conotoxins act at presynaptic membranes, they bind and block voltage-gated calcium channels (Cav). This is Omega-conotoxin-like TxMKLT1-0141 from Conus textile (Cloth-of-gold cone).